The chain runs to 239 residues: Purine nucleoside phosphorylase DeoD-type (239 aa).

Position 5 (His-5) interacts with a purine D-ribonucleoside. Residues Gly-21 and Arg-25 each coordinate phosphate. Lys-27 is modified (N6-acetyllysine). Residues Arg-44 and 88–91 (RVGS) contribute to the phosphate site. Residues 180-182 (EME) and 204-205 (SD) each bind a purine D-ribonucleoside. Asp-205 serves as the catalytic Proton donor.

It belongs to the PNP/UDP phosphorylase family. In terms of assembly, homohexamer; trimer of homodimers.

The enzyme catalyses a purine D-ribonucleoside + phosphate = a purine nucleobase + alpha-D-ribose 1-phosphate. It catalyses the reaction a purine 2'-deoxy-D-ribonucleoside + phosphate = a purine nucleobase + 2-deoxy-alpha-D-ribose 1-phosphate. Catalyzes the reversible phosphorolytic breakdown of the N-glycosidic bond in the beta-(deoxy)ribonucleoside molecules, with the formation of the corresponding free purine bases and pentose-1-phosphate. The chain is Purine nucleoside phosphorylase DeoD-type from Escherichia coli O8 (strain IAI1).